A 313-amino-acid polypeptide reads, in one-letter code: Chemotaxis protein CheV2 (313 aa).

A CheW-like domain is found at 16 to 172; that stretch reads EAQFLCFRLD…VEKMISDVFP (157 aa). Positions 193-313 constitute a Response regulatory domain; the sequence is LILIAEDSLS…IHEMLKKTLS (121 aa). Asp246 carries the post-translational modification 4-aspartylphosphate.

Post-translationally, phosphorylated; probably by transfer of CheAY phosphate group.

Plays a role in chemotaxis signal transduction system in order to colonize the host stomach. May act as a phosphate sink to control the flow of phosphate to CheAY. The protein is Chemotaxis protein CheV2 of Helicobacter pylori (strain ATCC 700392 / 26695) (Campylobacter pylori).